The following is a 457-amino-acid chain: MTAFSTLNVLPPAQLTNLNELGYLTMTPVQAAALPAILAGKDVRVQAKTGSGKTAAFGLGLLQQIDASLFQTQALVLCPTRELADQVAGELRRLARFLPNTKILTLCGGQPFGMQRDSLQHAPHIIVATPGRLLDHLQKGTVSLDALNTLVMDEADRMLDMGFSDAIDDVIRFAPASRQTLLFSATWPEAIAAISGRVQRDPLAIEIDSTDALPPIEQQFYETSSKGKIPLLQRLLSLHQPSSCVVFCNTKKDCQAVCDALNEVGQSALSLHGDLEQRDRDQTLVRFANGSARVLVATDVAARGLDIKSLELVVNFELAWDPEVHVHRIGRTARAGNSGLAISFCAPEEAQRANIISDMLQIKLNWQTPPANSSIATLEAEMATLCIDGGKKAKMRPGDVLGALTGDIGLDGADIGKIAVHPAHVYVAVRQAVAHKAWKQLQGGKIKGKTCRVRLLK.

The Q motif signature appears at 3-31; the sequence is AFSTLNVLPPAQLTNLNELGYLTMTPVQA. A Helicase ATP-binding domain is found at 34–205; that stretch reads LPAILAGKDV…GRVQRDPLAI (172 aa). 47-54 contacts ATP; sequence AKTGSGKT. The DEAD box signature appears at 153–156; it reads DEAD. In terms of domain architecture, Helicase C-terminal spans 230–376; that stretch reads PLLQRLLSLH…QTPPANSSIA (147 aa). An involved in 23S rRNA binding region spans residues 383–457; that stretch reads ATLCIDGGKK…GKTCRVRLLK (75 aa).

The protein belongs to the DEAD box helicase family. DbpA subfamily. In terms of assembly, monomer.

The protein resides in the cytoplasm. The enzyme catalyses ATP + H2O = ADP + phosphate + H(+). Its activity is regulated as follows. Requires hairpin 92 of 23S rRNA for optimal activity. ATPase activity is stimulated by interaction of the N-terminal domain with RNA. Its function is as follows. DEAD-box RNA helicase involved in the assembly of the 50S ribosomal subunit. Has an RNA-dependent ATPase activity, which is specific for 23S rRNA, and a 3' to 5' RNA helicase activity that uses the energy of ATP hydrolysis to destabilize and unwind short rRNA duplexes. Requires a single-stranded RNA loading site on the 3' side of the substrate helix. The sequence is that of ATP-dependent RNA helicase DbpA from Escherichia coli (strain K12).